A 273-amino-acid chain; its full sequence is SUMO-1 cysteine protease S273R (273 aa).

Catalysis depends on residues H168 and N187. Q226 lines the substrate pocket. The active-site Nucleophile is the C232.

It belongs to the peptidase C63 family.

It is found in the host cytoplasm. The protein resides in the virion. Functionally, cysteine protease that plays several role during infection including processing of the structural polyprotein or inhibition of the host immune response. Catalyzes the maturation of the pp220 and pp62 polyprotein precursors into core-shell proteins. Plays a role in the disruption of host pyroptosis via specific cleavage of gasdermin D/GSDMD. In addition, strongly decreases the host cGAS-STING signaling by targeting IKBKE via its enzymatic activity. Also impairs host FOXJ1-mediated antiviral effect via degradation of FOXJ1. The sequence is that of SUMO-1 cysteine protease S273R from Ornithodoros (relapsing fever ticks).